A 312-amino-acid polypeptide reads, in one-letter code: R2-like ligand binding oxidase (312 aa).

3 residues coordinate Mn(2+): Glu-68, Glu-101, and His-104. Positions Val-71–Tyr-162 form a cross-link, 3-(O4'-tyrosyl)-valine (Val-Tyr). Glu-101 provides a ligand contact to Fe cation. Fe cation is bound by residues Glu-167, Glu-202, and His-205.

This sequence belongs to the ribonucleoside diphosphate reductase small chain family. R2-like ligand binding oxidase subfamily. As to quaternary structure, homodimer. Fe cation is required as a cofactor. It depends on Mn(2+) as a cofactor.

Functionally, probable oxidase that might be involved in lipid metabolism. This is R2-like ligand binding oxidase from Mycolicibacterium gilvum (strain PYR-GCK) (Mycobacterium gilvum (strain PYR-GCK)).